A 79-amino-acid polypeptide reads, in one-letter code: Cytochrome b (79 aa).

3 consecutive transmembrane segments (helical) span residues 1–7 (SALFLAM), 31–52 (WLIR…YLHI), and 67–79 (WNIG…LTMA). Residues His37 and His51 each coordinate heme b.

This sequence belongs to the cytochrome b family. In terms of assembly, the cytochrome bc1 complex contains 11 subunits: 3 respiratory subunits (MT-CYB, CYC1 and UQCRFS1), 2 core proteins (UQCRC1 and UQCRC2) and 6 low-molecular weight proteins (UQCRH/QCR6, UQCRB/QCR7, UQCRQ/QCR8, UQCR10/QCR9, UQCR11/QCR10 and a cleavage product of UQCRFS1). This cytochrome bc1 complex then forms a dimer. Heme b serves as cofactor.

The protein resides in the mitochondrion inner membrane. In terms of biological role, component of the ubiquinol-cytochrome c reductase complex (complex III or cytochrome b-c1 complex) that is part of the mitochondrial respiratory chain. The b-c1 complex mediates electron transfer from ubiquinol to cytochrome c. Contributes to the generation of a proton gradient across the mitochondrial membrane that is then used for ATP synthesis. The sequence is that of Cytochrome b (MT-CYB) from Dipodomys californicus (California kangaroo rat).